Reading from the N-terminus, the 298-residue chain is Pyridoxal kinase PdxY (298 aa).

Serine 17 serves as a coordination point for substrate. Residues aspartate 119 and glutamate 156 each contribute to the ATP site. Substrate is bound at residue aspartate 234.

This sequence belongs to the pyridoxine kinase family. PdxY subfamily. As to quaternary structure, homodimer. It depends on Mg(2+) as a cofactor.

It carries out the reaction pyridoxal + ATP = pyridoxal 5'-phosphate + ADP + H(+). It participates in cofactor metabolism; pyridoxal 5'-phosphate salvage; pyridoxal 5'-phosphate from pyridoxal: step 1/1. Pyridoxal kinase involved in the salvage pathway of pyridoxal 5'-phosphate (PLP). Catalyzes the phosphorylation of pyridoxal to PLP. The protein is Pyridoxal kinase PdxY of Deinococcus radiodurans (strain ATCC 13939 / DSM 20539 / JCM 16871 / CCUG 27074 / LMG 4051 / NBRC 15346 / NCIMB 9279 / VKM B-1422 / R1).